A 110-amino-acid chain; its full sequence is Small ribosomal subunit protein bS16 (110 aa).

Residues 84–110 (KRAPRNNPEKAVPRKERKAAAEAAAKA) form a disordered region. A compositionally biased stretch (basic and acidic residues) spans 90–103 (NPEKAVPRKERKAA).

This sequence belongs to the bacterial ribosomal protein bS16 family.

The protein is Small ribosomal subunit protein bS16 of Afipia carboxidovorans (strain ATCC 49405 / DSM 1227 / KCTC 32145 / OM5) (Oligotropha carboxidovorans).